Reading from the N-terminus, the 247-residue chain is UPF0309 protein GWCH70_1414 (247 aa).

Residues 31–214 (VSEAIQKGGI…VLMAENGFEP (184 aa)) enclose the SIS domain.

The protein belongs to the UPF0309 family.

In Geobacillus sp. (strain WCH70), this protein is UPF0309 protein GWCH70_1414.